The chain runs to 81 residues: Small ribosomal subunit protein bS16 (81 aa).

Belongs to the bacterial ribosomal protein bS16 family.

In Alkaliphilus oremlandii (strain OhILAs) (Clostridium oremlandii (strain OhILAs)), this protein is Small ribosomal subunit protein bS16.